Here is a 251-residue protein sequence, read N- to C-terminus: Probable phosphatase Sputw3181_2734 (251 aa).

The Zn(2+) site is built by His8, His10, His16, His41, Glu74, His102, His132, Asp193, and His195.

It belongs to the PHP family. It depends on Zn(2+) as a cofactor.

The protein is Probable phosphatase Sputw3181_2734 of Shewanella sp. (strain W3-18-1).